The sequence spans 33 residues: uncharacterized protein (33 aa).

The chain crosses the membrane as a helical span at residues 11–31 (LALVIYMSVVLLLMVGVPLLF).

It localises to the membrane. This is an uncharacterized protein from Saccharomyces cerevisiae (strain ATCC 204508 / S288c) (Baker's yeast).